Reading from the N-terminus, the 134-residue chain is Histone H2B (134 aa).

Polar residues predominate over residues 1–10; it reads MSDKASTPKK. 2 disordered regions span residues 1-29 and 113-134; these read MSDK…EAKK and VSEG…SKSR. Basic and acidic residues predominate over residues 12-29; sequence ATKDATKPKKVGDEEAKK. Over residues 125–134 the composition is skewed to polar residues; it reads GQPTSGSKSR.

It belongs to the histone H2B family. As to quaternary structure, the nucleosome is a histone octamer containing two molecules each of H2A, H2B, H3 and H4 assembled in one H3-H4 heterotetramer and two H2A-H2B heterodimers. The octamer wraps approximately 147 bp of DNA.

Its subcellular location is the nucleus. It localises to the chromosome. In terms of biological role, core component of nucleosome. Nucleosomes wrap and compact DNA into chromatin, limiting DNA accessibility to the cellular machineries which require DNA as a template. Histones thereby play a central role in transcription regulation, DNA repair, DNA replication and chromosomal stability. DNA accessibility is regulated via a complex set of post-translational modifications of histones, also called histone code, and nucleosome remodeling. The chain is Histone H2B from Entamoeba invadens.